The chain runs to 86 residues: Exodeoxyribonuclease 7 small subunit (86 aa).

This sequence belongs to the XseB family. In terms of assembly, heterooligomer composed of large and small subunits.

It is found in the cytoplasm. The enzyme catalyses Exonucleolytic cleavage in either 5'- to 3'- or 3'- to 5'-direction to yield nucleoside 5'-phosphates.. Its function is as follows. Bidirectionally degrades single-stranded DNA into large acid-insoluble oligonucleotides, which are then degraded further into small acid-soluble oligonucleotides. The chain is Exodeoxyribonuclease 7 small subunit from Xanthomonas axonopodis pv. citri (strain 306).